Consider the following 334-residue polypeptide: Glyceraldehyde-3-phosphate dehydrogenase (334 aa).

Residues 10-11 (RI), aspartate 33, lysine 77, and threonine 119 each bind NAD(+). Residues 149-151 (SCT), threonine 180, 209-210 (TG), and arginine 232 each bind D-glyceraldehyde 3-phosphate. Cysteine 150 functions as the Nucleophile in the catalytic mechanism. Asparagine 314 contacts NAD(+).

Belongs to the glyceraldehyde-3-phosphate dehydrogenase family. As to quaternary structure, homotetramer.

The protein localises to the cytoplasm. It catalyses the reaction D-glyceraldehyde 3-phosphate + phosphate + NAD(+) = (2R)-3-phospho-glyceroyl phosphate + NADH + H(+). Its pathway is carbohydrate degradation; glycolysis; pyruvate from D-glyceraldehyde 3-phosphate: step 1/5. Its function is as follows. Catalyzes the oxidative phosphorylation of glyceraldehyde 3-phosphate (G3P) to 1,3-bisphosphoglycerate (BPG) using the cofactor NAD. The first reaction step involves the formation of a hemiacetal intermediate between G3P and a cysteine residue, and this hemiacetal intermediate is then oxidized to a thioester, with concomitant reduction of NAD to NADH. The reduced NADH is then exchanged with the second NAD, and the thioester is attacked by a nucleophilic inorganic phosphate to produce BPG. This is Glyceraldehyde-3-phosphate dehydrogenase (gap) from Chlamydia trachomatis serovar D (strain ATCC VR-885 / DSM 19411 / UW-3/Cx).